The primary structure comprises 525 residues: MSVLRFLVTRQALAALTRPRTLNIIQNPAQIAYASTLCNQNSNHNAKDLTKSSANLSLMQTRGHKRFGHQEEKTPSVTKYFHMFILSLFLISVMDWGKVKRMLTPKVDADAGQRPSSAADVNGEDKSSESESEDSEDEEAGSDLHLHEGKKIREKVGFRERKIIEYENRIRQFSTPDKVFRYFATIQVPVADDRHEVYMTPTDFLTSMTPGMKQPDGLGLDQYRRYDPKSVGEQLNLHLEKNSIFYKLGSYGLITFSDYIFLLTVLSISRRHFEIAFRMFDLNGDGDVDCEEFEMVATLVRQQTSMGTRHRDHANTGNTFKGVNSALITYFFGPNMDEKLTIEKFLDFQEQLQREILSLEFERKEPNDEGNITEADFAELLLAYAGYPLKKKQKKLKRVKRRFRDHGKGISKQDYLDFFHFLNNINDVDTALTFYHIAGASIDQQTLQHVAKTVAMVNLSDHVVDVVFTIFDENNDNQLSNKEFISVMKNRVQRGLEKPKDTGFLKMMRSVFKCAKETKPVLLDI.

Positions 109-146 (ADAGQRPSSAADVNGEDKSSESESEDSEDEEAGSDLHL) are disordered. The segment covering 130-141 (SESEDSEDEEAG) has biased composition (acidic residues). EF-hand domains lie at 268-303 (ISRR…VRQQ) and 459-494 (LSDH…RVQR). 10 residues coordinate Ca(2+): D281, N283, D285, D287, E292, D472, N474, D476, Q478, and E483.

It belongs to the MICU1 family. MICU1 subfamily.

Its subcellular location is the mitochondrion intermembrane space. The protein resides in the mitochondrion inner membrane. Calcium sensor of the mitochondrial calcium uniporter (MCU) channel, which senses calcium level via its EF-hand domains. At low calcium levels, MICU1 occludes the pore of the MCU channel, preventing mitochondrial calcium uptake. At higher calcium levels, calcium-binding to MICU1 induces a conformational change that weakens MCU-MICU1 interactions and moves MICU1 away from the pore, allowing calcium permeation through the MCU channel. Also required to protect against manganese toxicity by preventing manganese uptake by MCU. During development, required in alpha/beta or gamma mushroom body neurons to support olfactory intermediate-term memory in the adult. The sequence is that of Calcium uptake protein 1 homolog, mitochondrial from Drosophila melanogaster (Fruit fly).